The chain runs to 84 residues: Putative membrane protein insertion efficiency factor (84 aa).

Belongs to the UPF0161 family.

Its subcellular location is the cell inner membrane. Could be involved in insertion of integral membrane proteins into the membrane. In Nostoc sp. (strain PCC 7120 / SAG 25.82 / UTEX 2576), this protein is Putative membrane protein insertion efficiency factor.